We begin with the raw amino-acid sequence, 474 residues long: ATP synthase subunit beta (474 aa).

An ATP-binding site is contributed by 153–160 (GGAGVGKT).

The protein belongs to the ATPase alpha/beta chains family. F-type ATPases have 2 components, CF(1) - the catalytic core - and CF(0) - the membrane proton channel. CF(1) has five subunits: alpha(3), beta(3), gamma(1), delta(1), epsilon(1). CF(0) has three main subunits: a(1), b(2) and c(9-12). The alpha and beta chains form an alternating ring which encloses part of the gamma chain. CF(1) is attached to CF(0) by a central stalk formed by the gamma and epsilon chains, while a peripheral stalk is formed by the delta and b chains.

Its subcellular location is the cell inner membrane. It carries out the reaction ATP + H2O + 4 H(+)(in) = ADP + phosphate + 5 H(+)(out). In terms of biological role, produces ATP from ADP in the presence of a proton gradient across the membrane. The catalytic sites are hosted primarily by the beta subunits. This chain is ATP synthase subunit beta, found in Rickettsia prowazekii (strain Madrid E).